A 365-amino-acid polypeptide reads, in one-letter code: ATP-dependent (S)-NAD(P)H-hydrate dehydratase (365 aa).

The transit peptide at 1-43 (MLVKPSIISGLVRLTSHSPSSSSSVLRRQEFLVRTLCGSPIIR) directs the protein to the chloroplast. N-acetylserine is present on Leu-2. In terms of domain architecture, YjeF C-terminal spans 53–361 (AESVLRTVTP…ECLGESLEDI (309 aa)). (6S)-NADPHX is bound by residues Gly-169 and 222–228 (NVNEYKR). ATP contacts are provided by residues 262–266 (KGKSD) and 281–290 (GSPRRCGGQG). Position 291 (Asp-291) interacts with (6S)-NADPHX.

This sequence belongs to the NnrD/CARKD family. Mg(2+) serves as cofactor.

The protein resides in the plastid. It localises to the chloroplast. The protein localises to the cytoplasm. The catalysed reaction is (6S)-NADHX + ATP = ADP + phosphate + NADH + H(+). It catalyses the reaction (6S)-NADPHX + ATP = ADP + phosphate + NADPH + H(+). Functionally, catalyzes the dehydration of the S-form of NAD(P)HX at the expense of ATP, which is converted to ADP. Together with NAD(P)HX epimerase, which catalyzes the epimerization of the S- and R-forms, the enzyme allows the repair of both epimers of NAD(P)HX, a damaged form of NAD(P)H that is a result of enzymatic or heat-dependent hydration. This Arabidopsis thaliana (Mouse-ear cress) protein is ATP-dependent (S)-NAD(P)H-hydrate dehydratase.